A 298-amino-acid polypeptide reads, in one-letter code: Oxidoreductase YdhF (298 aa).

Tyrosine 55 functions as the Proton donor in the catalytic mechanism. Residues 158–159 (SN), 209–220 (WSCLGGGRLFND), and 263–264 (SG) each bind NADP(+).

The protein belongs to the aldo/keto reductase family. Aldo/keto reductase 2 subfamily.

May function as oxidoreductase. This Escherichia coli (strain K12) protein is Oxidoreductase YdhF (ydhF).